The following is a 241-amino-acid chain: Small ribosomal subunit protein eS4 (241 aa).

Residues 37 to 100 enclose the S4 RNA-binding domain; the sequence is LPIVVWARDQ…GKHYRILRDK (64 aa).

Belongs to the eukaryotic ribosomal protein eS4 family.

The sequence is that of Small ribosomal subunit protein eS4 from Methanospirillum hungatei JF-1 (strain ATCC 27890 / DSM 864 / NBRC 100397 / JF-1).